Consider the following 138-residue polypeptide: Large ribosomal subunit protein uL16 (138 aa).

Residues 1–15 show a composition bias toward basic residues; it reads MLSPRKVKYRKKQRG. The interval 1–21 is disordered; that stretch reads MLSPRKVKYRKKQRGRLSGEA.

This sequence belongs to the universal ribosomal protein uL16 family. Part of the 50S ribosomal subunit.

Functionally, binds 23S rRNA and is also seen to make contacts with the A and possibly P site tRNAs. The protein is Large ribosomal subunit protein uL16 of Borrelia duttonii (strain Ly).